A 101-amino-acid polypeptide reads, in one-letter code: Small ribosomal subunit protein uS10 (101 aa).

The protein belongs to the universal ribosomal protein uS10 family. In terms of assembly, part of the 30S ribosomal subunit.

Involved in the binding of tRNA to the ribosomes. This Cytophaga hutchinsonii (strain ATCC 33406 / DSM 1761 / CIP 103989 / NBRC 15051 / NCIMB 9469 / D465) protein is Small ribosomal subunit protein uS10.